Reading from the N-terminus, the 500-residue chain is Cysteine-rich secretory protein LCCL domain-containing 1 (500 aa).

A signal peptide spans 1–23 (MMCKAQEWLRVTALLFVARAVPA). The 141-residue stretch at 66-206 (LDLHNKLRSQ…PKAVYLVCNY (141 aa)) folds into the SCP domain. A disordered region spans residues 258–281 (EIERQQSQVHDTHVRTRSDDSDRN). LCCL domains follow at residues 289–384 (MSQI…ANSF) and 390–492 (TVQA…TGGK). Intrachain disulfides connect cysteine 295–cysteine 313, cysteine 317–cysteine 337, cysteine 396–cysteine 418, and cysteine 422–cysteine 445.

The protein belongs to the CRISP family.

Its subcellular location is the secreted. The protein is Cysteine-rich secretory protein LCCL domain-containing 1 (Crispld1) of Mus musculus (Mouse).